A 364-amino-acid chain; its full sequence is MAGNTFGRALRLTTFGESHGPGLGGIIDGCPAGLELTEAHIQAELDRRKPGQGPTATKRKEADTVRLLSGVFEGCTTGTPIAFFIANEDQRSRDYGNLAEAFRPGHADWAYFQKYNGLRDHRGGGRSSGRETAARVAGGVIAKKILARRGVTILGGCVELGGIAAPLWGLDMDGAAARPYCAAAPSVVSQWDALVAEARKAGETLGGIVRIEAHNVPAGLGEPVFDKLDAVLAHAVMSVGAVKGVEVGEGFAAAALRGSQNNDPLLPADAPEPGRARFASNHAGGILGGISSGQDIVLRVAVKPIASIAVTQKTVDRQGQPVDILIGGRHDLSAIPRIVPVLEAMTALALADALLLQQRMGLGL.

Arg48 provides a ligand contact to NADP(+). Residues Arg126–Ser128, Gly288, Lys303–Ser307, and Arg329 contribute to the FMN site.

Belongs to the chorismate synthase family. As to quaternary structure, homotetramer. FMNH2 serves as cofactor.

It carries out the reaction 5-O-(1-carboxyvinyl)-3-phosphoshikimate = chorismate + phosphate. It participates in metabolic intermediate biosynthesis; chorismate biosynthesis; chorismate from D-erythrose 4-phosphate and phosphoenolpyruvate: step 7/7. Functionally, catalyzes the anti-1,4-elimination of the C-3 phosphate and the C-6 proR hydrogen from 5-enolpyruvylshikimate-3-phosphate (EPSP) to yield chorismate, which is the branch point compound that serves as the starting substrate for the three terminal pathways of aromatic amino acid biosynthesis. This reaction introduces a second double bond into the aromatic ring system. This Desulfovibrio desulfuricans (strain ATCC 27774 / DSM 6949 / MB) protein is Chorismate synthase.